A 168-amino-acid chain; its full sequence is MVEFVNPKSLGELEENVVAINRVTKVVKGGRRLRFAALVVVGDKQGHVGFGTGKAQEVPEAIRKAIEDAKRKLITVPTVSTTIPHDVLGEWGGGKILVKPAEEGSGVAAGGAARSVMELAGIADVTAKSLGSATPINVIRATFDALTSLKDAEEVAKLRGVSLEHLAE.

In terms of domain architecture, S5 DRBM spans leucine 13–valine 76.

It belongs to the universal ribosomal protein uS5 family. Part of the 30S ribosomal subunit. Contacts proteins S4 and S8.

With S4 and S12 plays an important role in translational accuracy. Its function is as follows. Located at the back of the 30S subunit body where it stabilizes the conformation of the head with respect to the body. The protein is Small ribosomal subunit protein uS5 of Leuconostoc mesenteroides subsp. mesenteroides (strain ATCC 8293 / DSM 20343 / BCRC 11652 / CCM 1803 / JCM 6124 / NCDO 523 / NBRC 100496 / NCIMB 8023 / NCTC 12954 / NRRL B-1118 / 37Y).